Consider the following 206-residue polypeptide: Guanylate kinase (206 aa).

Positions 5-183 (GNLFVVAAPS…AVFDLKTIVH (179 aa)) constitute a Guanylate kinase-like domain. Position 12–19 (12–19 (APSGAGKS)) interacts with ATP.

The protein belongs to the guanylate kinase family.

It is found in the cytoplasm. It catalyses the reaction GMP + ATP = GDP + ADP. Functionally, essential for recycling GMP and indirectly, cGMP. This chain is Guanylate kinase, found in Polaromonas sp. (strain JS666 / ATCC BAA-500).